The chain runs to 501 residues: Xylulose kinase (501 aa).

81–82 (MH) lines the substrate pocket. D239 acts as the Proton acceptor in catalysis.

This sequence belongs to the FGGY kinase family.

The enzyme catalyses D-xylulose + ATP = D-xylulose 5-phosphate + ADP + H(+). In terms of biological role, catalyzes the phosphorylation of D-xylulose to D-xylulose 5-phosphate. This Lactococcus lactis subsp. lactis (strain IL1403) (Streptococcus lactis) protein is Xylulose kinase.